The following is a 1351-amino-acid chain: D-lysergyl-peptide-synthetase subunit 2 (1351 aa).

The interval 285-684 (RCLSQPTASA…GRKDTQVKLR (400 aa)) is adenylation (A) domain. The 77-residue stretch at 828-904 (APQTTTEKLL…ALACVVRSGK (77 aa)) folds into the Carrier domain. S865 carries the post-translational modification O-(pantetheine 4'-phosphoryl)serine. The tract at residues 941–1340 (EDVYPCTPLQ…LIRDILAVPQ (400 aa)) is condensation (C) domain.

The protein belongs to the NRP synthetase family.

Its pathway is alkaloid biosynthesis; ergot alkaloid biosynthesis. Functionally, D-lysergyl-peptide-synthetase subunit 2; part of the gene cluster that mediates the biosynthesis of fungal ergot alkaloid ergovaline, the predominant ergopeptine product in E.festucae var. lolii. DmaW catalyzes the first step of ergot alkaloid biosynthesis by condensing dimethylallyl diphosphate (DMAP) and tryptophan to form 4-dimethylallyl-L-tryptophan. The second step is catalyzed by the methyltransferase easF that methylates 4-dimethylallyl-L-tryptophan in the presence of S-adenosyl-L-methionine, resulting in the formation of 4-dimethylallyl-L-abrine. The catalase easC and the FAD-dependent oxidoreductase easE then transform 4-dimethylallyl-L-abrine to chanoclavine-I which is further oxidized by easD in the presence of NAD(+), resulting in the formation of chanoclavine-I aldehyde. Agroclavine dehydrogenase easG then mediates the conversion of chanoclavine-I aldehyde to agroclavine via a non-enzymatic adduct reaction: the substrate is an iminium intermediate that is formed spontaneously from chanoclavine-I aldehyde in the presence of glutathione. The presence of easA is not required to complete this reaction. Further conversion of agroclavine to paspalic acid is a two-step process involving oxidation of agroclavine to elymoclavine and of elymoclavine to paspalic acid, the second step being performed by the elymoclavine oxidase cloA. Paspalic acid is then further converted to D-lysergic acid. Ergovaline is assembled from D-lysergic acid and three different amino acids by the D-lysergyl-peptide-synthetase composed of a monomudular (lpsB) and a trimodular (lpsA) nonribosomal peptide synthetase subunit. The protein is D-lysergyl-peptide-synthetase subunit 2 of Epichloe festucae var. lolii (Neotyphodium lolii).